An 862-amino-acid chain; its full sequence is DNA mismatch repair protein MutS (862 aa).

ATP is bound at residue 613-620; it reads GPNMAGKS.

Belongs to the DNA mismatch repair MutS family.

In terms of biological role, this protein is involved in the repair of mismatches in DNA. It is possible that it carries out the mismatch recognition step. This protein has a weak ATPase activity. This chain is DNA mismatch repair protein MutS, found in Desulfitobacterium hafniense (strain Y51).